The primary structure comprises 783 residues: DNA polymerase II (783 aa).

It belongs to the DNA polymerase type-B family.

The catalysed reaction is DNA(n) + a 2'-deoxyribonucleoside 5'-triphosphate = DNA(n+1) + diphosphate. DNA polymerase II activity is regulated by the lexA gene during the SOS response. Thought to be involved in DNA repair and/or mutagenesis. Its processivity is enhanced by the beta sliding clamp (dnaN) and clamp loader. This is DNA polymerase II (polB) from Escherichia coli (strain K12).